A 177-amino-acid polypeptide reads, in one-letter code: MSDLTTIARPYAKAAFDFAVDKGQLDQWGQMLSFAAEVAKNEQMNELLTSSFSAEKMAEIFVAVCGEQVDAHGQNLLKVMAENGRLAALPDVCEQFFILKKEHEKEIDVEVISASELSDEQLANIGSKLEARLERKVKLNCSVDETLLGGVIIRAGDLVIDDSARGRLNRLSDALQS.

It belongs to the ATPase delta chain family. In terms of assembly, F-type ATPases have 2 components, F(1) - the catalytic core - and F(0) - the membrane proton channel. F(1) has five subunits: alpha(3), beta(3), gamma(1), delta(1), epsilon(1). F(0) has three main subunits: a(1), b(2) and c(10-14). The alpha and beta chains form an alternating ring which encloses part of the gamma chain. F(1) is attached to F(0) by a central stalk formed by the gamma and epsilon chains, while a peripheral stalk is formed by the delta and b chains.

The protein resides in the cell inner membrane. Functionally, f(1)F(0) ATP synthase produces ATP from ADP in the presence of a proton or sodium gradient. F-type ATPases consist of two structural domains, F(1) containing the extramembraneous catalytic core and F(0) containing the membrane proton channel, linked together by a central stalk and a peripheral stalk. During catalysis, ATP synthesis in the catalytic domain of F(1) is coupled via a rotary mechanism of the central stalk subunits to proton translocation. In terms of biological role, this protein is part of the stalk that links CF(0) to CF(1). It either transmits conformational changes from CF(0) to CF(1) or is implicated in proton conduction. This Vibrio parahaemolyticus serotype O3:K6 (strain RIMD 2210633) protein is ATP synthase subunit delta.